We begin with the raw amino-acid sequence, 152 residues long: Nucleoside diphosphate kinase A 1 (152 aa).

ATP-binding residues include Lys-12, Phe-60, Arg-88, Thr-94, Arg-105, and Asn-115. Residue His-118 is the Pros-phosphohistidine intermediate of the active site.

The protein belongs to the NDK family. As to quaternary structure, homohexamer. Mg(2+) is required as a cofactor. In terms of processing, the N-terminus is blocked.

It is found in the cytoplasm. The protein localises to the cell membrane. It localises to the nucleus. It catalyses the reaction a 2'-deoxyribonucleoside 5'-diphosphate + ATP = a 2'-deoxyribonucleoside 5'-triphosphate + ADP. The enzyme catalyses a ribonucleoside 5'-diphosphate + ATP = a ribonucleoside 5'-triphosphate + ADP. With respect to regulation, autophosphorylation at His-118 increases serine/threonine protein kinase activity of the enzyme. Interaction with the SET complex inhibits exonuclease activity. In terms of biological role, major role in the synthesis of nucleoside triphosphates other than ATP. Possesses nucleoside-diphosphate kinase, serine/threonine-specific protein kinase, geranyl and farnesyl pyrophosphate kinase, histidine protein kinase and 3'-5' exonuclease activities. Involved in cell proliferation, differentiation and development, signal transduction, G protein-coupled receptor endocytosis, and gene expression. Required for neural development including neural patterning and cell fate determination. In Bos taurus (Bovine), this protein is Nucleoside diphosphate kinase A 1 (NME1-1).